The primary structure comprises 440 residues: Proton extrusion protein PxcA (440 aa).

The next 4 membrane-spanning stretches (helical) occupy residues 222–242, 316–336, 352–374, and 400–420; these read FVLT…TFFL, NAIA…LVLV, IVYG…MFVG, and FNFL…KYWI.

It belongs to the CemA family.

Its subcellular location is the cell inner membrane. Required for H(+) efflux immediately after light irradiation to form a rapid H(+) concentration gradient across the thylakoid membranes. Together with PxcL, contributes to transient H(+) uptake following dark to light transition. Involved in light-induced Na(+)-dependent proton extrusion. Also seems to be involved in CO(2) transport. The protein is Proton extrusion protein PxcA of Synechocystis sp. (strain ATCC 27184 / PCC 6803 / Kazusa).